A 178-amino-acid chain; its full sequence is MADRLTQLQICLDQLIQQFNSTINYVNTSAEPSLLDDDDVNSYSNMAANAPLPQSQQQRQQQKKQQEPQQEIEQPQQQSNPESKSISPPKEKVSFDNVINELCTDLILKSRQIKMLIDSLPGIGVTPNEQMNLINELSDKLQAIEEERIQKIKEKDNLLNLLESMIKEVVNGITETRI.

The tract at residues 36-91 is disordered; the sequence is DDDDVNSYSNMAANAPLPQSQQQRQQQKKQQEPQQEIEQPQQQSNPESKSISPPKE. The segment covering 67–85 has biased composition (low complexity); sequence EPQQEIEQPQQQSNPESKS. The stretch at 128–169 forms a coiled coil; it reads NEQMNLINELSDKLQAIEEERIQKIKEKDNLLNLLESMIKEV.

The protein belongs to the Mediator complex subunit 21 family. Component of the Mediator complex.

The protein localises to the nucleus. Functionally, component of the Mediator complex, a coactivator involved in the regulated transcription of nearly all RNA polymerase II-dependent genes. Mediator functions as a bridge to convey information from gene-specific regulatory proteins to the basal RNA polymerase II transcription machinery. Mediator is recruited to promoters by direct interactions with regulatory proteins and serves as a scaffold for the assembly of a functional preinitiation complex with RNA polymerase II and the general transcription factors. This chain is Mediator of RNA polymerase II transcription subunit 21 (SRB7), found in Candida albicans (strain SC5314 / ATCC MYA-2876) (Yeast).